The following is a 193-amino-acid chain: MAQLEYKLVIVGGGGVGKSALTIQLIQNHFIDEYDPTIEDSYRKQVVIDEETCLLDILDTAGQEEYSAMRDQYMRTGQGFVMVYSITSRSSFDEINAFREQILRVKDKDTVPMVLAGNKCDLASERQVTTNEGQELARAFGCPFVETSAKARLNVEECFYGLVREIRKEVIGDKKGGGGKKKKLMGIDRCKLL.

12–19 contacts GTP; that stretch reads GGGGVGKS. Positions 34 to 42 match the Effector region motif; the sequence is YDPTIEDSY. Residues 59 to 63 and 118 to 121 each bind GTP; these read DTAGQ and NKCD. C190 carries the post-translational modification Cysteine methyl ester. C190 is lipidated: S-geranylgeranyl cysteine. Residues 191-193 constitute a propeptide, removed in mature form; it reads KLL.

The protein belongs to the small GTPase superfamily. Ras family.

The protein localises to the cell membrane. The catalysed reaction is GTP + H2O = GDP + phosphate + H(+). Functionally, ras proteins bind GDP/GTP and possess intrinsic GTPase activity. This is Ras-like protein 2 (RAS-2) from Physarum polycephalum (Slime mold).